The primary structure comprises 384 residues: Queuine tRNA-ribosyltransferase (384 aa).

Catalysis depends on D92, which acts as the Proton acceptor. Substrate is bound by residues 92 to 96, D146, Q192, and G219; that span reads DSGGF. The interval 250 to 256 is RNA binding; that stretch reads GVGTPAE. D269 acts as the Nucleophile in catalysis. Positions 274 to 278 are RNA binding; important for wobble base 34 recognition; it reads TRNAR. Zn(2+) contacts are provided by C307, C309, C312, and H338.

The protein belongs to the queuine tRNA-ribosyltransferase family. Homodimer. Within each dimer, one monomer is responsible for RNA recognition and catalysis, while the other monomer binds to the replacement base PreQ1. The cofactor is Zn(2+).

The catalysed reaction is 7-aminomethyl-7-carbaguanine + guanosine(34) in tRNA = 7-aminomethyl-7-carbaguanosine(34) in tRNA + guanine. The protein operates within tRNA modification; tRNA-queuosine biosynthesis. Catalyzes the base-exchange of a guanine (G) residue with the queuine precursor 7-aminomethyl-7-deazaguanine (PreQ1) at position 34 (anticodon wobble position) in tRNAs with GU(N) anticodons (tRNA-Asp, -Asn, -His and -Tyr). Catalysis occurs through a double-displacement mechanism. The nucleophile active site attacks the C1' of nucleotide 34 to detach the guanine base from the RNA, forming a covalent enzyme-RNA intermediate. The proton acceptor active site deprotonates the incoming PreQ1, allowing a nucleophilic attack on the C1' of the ribose to form the product. After dissociation, two additional enzymatic reactions on the tRNA convert PreQ1 to queuine (Q), resulting in the hypermodified nucleoside queuosine (7-(((4,5-cis-dihydroxy-2-cyclopenten-1-yl)amino)methyl)-7-deazaguanosine). This chain is Queuine tRNA-ribosyltransferase, found in Desulfosudis oleivorans (strain DSM 6200 / JCM 39069 / Hxd3) (Desulfococcus oleovorans).